Here is a 542-residue protein sequence, read N- to C-terminus: Protein XP55 (542 aa).

The signal sequence occupies residues 1 to 33 (MTARRTRWTRRTDRSLPIRSAAAAVAFAAGATA). Residue Cys34 is the site of N-palmitoyl cysteine attachment. The S-diacylglycerol cysteine moiety is linked to residue Cys34. The interval 519 to 542 (LEGRTNTASPAGPGGTSRTGGRKK) is disordered.

It belongs to the bacterial solute-binding protein 5 family.

Its subcellular location is the cell membrane. In terms of biological role, required for transport of an unidentified substrate. The protein is Protein XP55 (xp55) of Streptomyces lividans.